The following is a 195-amino-acid chain: Rho-related protein racB (195 aa).

Residue 10-17 (GDGAVGKT) participates in GTP binding. Residues 32–40 (YVPTVFDNY) carry the Effector region motif. Residues 57-61 (DTAGQ) and 115-118 (TKCD) contribute to the GTP site. C192 bears the Cysteine methyl ester mark. A lipid anchor (S-geranylgeranyl cysteine) is attached at C192. The propeptide at 193–195 (SIL) is removed in mature form.

Belongs to the small GTPase superfamily. Rho family. Interacts with pakB.

It is found in the cell membrane. The chain is Rho-related protein racB (racB) from Dictyostelium discoideum (Social amoeba).